A 520-amino-acid polypeptide reads, in one-letter code: Maturase K (520 aa).

The protein belongs to the intron maturase 2 family. MatK subfamily.

The protein resides in the plastid. It localises to the chloroplast. Its function is as follows. Usually encoded in the trnK tRNA gene intron. Probably assists in splicing its own and other chloroplast group II introns. The protein is Maturase K of Cycas taitungensis (Prince sago).